The primary structure comprises 526 residues: MSVIWKDAIRSNAWPFIEAKKILDSLNGKVPEKGYVLFETGYGPSGLPHIGTFAENARVVMVQKAFEQLSDIPTKLICFSDDMDGLRKVPSNIPNPEMVAQYMDMPLTSIPDPFGECKSYGHYMNAKLCTFLDKFGFQYEFYSSTNCYKAGLFDDMLIRVLEKYDEIMALMLPTFREERKTTYAPFMPICPKTGKVLQVPIEKWDARAGTVSYKDEDGNDVEVPVTGGHCKLQWKPDFGMRWAALNVDYEMYGKDHLANSRLYSKICQILGGKPPVQFCYELFLDENGEKISKSRGNSISVDDWLKYASVESIALFMYKNPARAKRLFFDVIPKNVDEYITLNQKYHLEEDMVTRFANPVYHIHHGNVPKIETFGLTYSLLLNLTAVCNPSDKSVLWGFITKYEPKATPNTSTYLDHLAEFAIRYYHDFVQIHKSYLVVSEKHKIILYDILDMLSNITDQTEEENIQKAMYDIGMKAGYKNLRYYFKDLYQILLGQNEGPRFGTFIKLYGVEATKKLVEEKLYPVA.

The 'HIGH' region motif lies at 44-52 (PSGLPHIGT). The 'KMSKS' region signature appears at 290-294 (KISKS). Residue Lys293 participates in ATP binding.

This sequence belongs to the class-I aminoacyl-tRNA synthetase family.

It is found in the cytoplasm. The catalysed reaction is tRNA(Lys) + L-lysine + ATP = L-lysyl-tRNA(Lys) + AMP + diphosphate. The polypeptide is Lysine--tRNA ligase (Rickettsia typhi (strain ATCC VR-144 / Wilmington)).